A 122-amino-acid polypeptide reads, in one-letter code: Large ribosomal subunit protein uL14 (122 aa).

It belongs to the universal ribosomal protein uL14 family. Part of the 50S ribosomal subunit. Forms a cluster with proteins L3 and L19. In the 70S ribosome, L14 and L19 interact and together make contacts with the 16S rRNA in bridges B5 and B8.

Functionally, binds to 23S rRNA. Forms part of two intersubunit bridges in the 70S ribosome. The sequence is that of Large ribosomal subunit protein uL14 from Desulfitobacterium hafniense (strain DSM 10664 / DCB-2).